We begin with the raw amino-acid sequence, 29 residues long: Potassium-transporting ATPase KdpF subunit (29 aa).

The helical transmembrane segment at 2 to 22 threads the bilayer; that stretch reads LIGEAVLAVVTVAVVAYLTYV.

The protein belongs to the KdpF family. The system is composed of three essential subunits: KdpA, KdpB and KdpC. The complex also contains KdpF, a small non-essential subunit.

The protein localises to the cell membrane. Functionally, part of the high-affinity ATP-driven potassium transport (or Kdp) system, which catalyzes the hydrolysis of ATP coupled with the electrogenic transport of potassium into the cytoplasm. This subunit may be involved in stabilization of the complex. The Kdp system is essential for growth under K(+) limitation, and for survival under desiccation and salt crystal inclusion. The chain is Potassium-transporting ATPase KdpF subunit from Halobacterium salinarum (strain ATCC 29341 / DSM 671 / R1).